Here is a 258-residue protein sequence, read N- to C-terminus: Protein OS-9 homolog (258 aa).

A signal peptide spans 1–18 (MNWTSLVYLWFIFKSIFA). N-linked (GlcNAc...) asparagine glycans are attached at residues N2, N51, and N70. The MRH domain maps to 114–237 (TSCVFSFNLH…HINVPKLCSL (124 aa)). An intrachain disulfide couples C116 to C132. The a mannooligosaccharide derivative site is built by W127 and Q139. N165 carries an N-linked (GlcNAc...) asparagine glycan. 2 disulfide bridges follow: C193/C223 and C208/C235. A mannooligosaccharide derivative contacts are provided by D194, R200, E219, and Y225.

It belongs to the OS-9 family. Interacts with missfolded ER lumenal proteins.

Its subcellular location is the endoplasmic reticulum membrane. Lectin involved in the quality control of the secretory pathway. As a member of the endoplasmic reticulum-associated degradation lumenal (ERAD-L) surveillance system, targets misfolded endoplasmic reticulum lumenal glycoproteins for degradation. The protein is Protein OS-9 homolog (YOS9) of Candida albicans (strain SC5314 / ATCC MYA-2876) (Yeast).